Reading from the N-terminus, the 294-residue chain is RNA polymerase sigma-K factor (294 aa).

A propeptide spanning residues 1 to 20 is cleaved from the precursor; it reads MVTGVFAALGFVVKELVFLV. Residues 1–156 are encoded by spoIVCB; the sequence is MVTGVFAALG…VNNCFFIFKS (156 aa). Positions 79–92 match the Polymerase core binding motif; that stretch reads DLISIGTIGLIKGI. The interval 114 to 165 is not present in recombined mature factor; it reads EIVITKGGCIHPSLIRFNIYGVRIHNGNFFHDKVNNCFFIFKSMPPLFVMNN. Residues 157–294 are encoded by spoIIIC; that stretch reads MPPLFVMNNE…KEKRKKAKGK (138 aa). The H-T-H motif DNA-binding region spans 251–270; it reads QREIAKELGISRSYVSRIEK.

The protein belongs to the sigma-70 factor family.

Functionally, sigma factors are initiation factors that promote the attachment of RNA polymerase to specific initiation sites and are then released. This sigma factor is responsible for the expression of sporulation specific genes in the mother cell. In Bacillus subtilis (strain 168), this protein is RNA polymerase sigma-K factor (sigK).